Here is a 380-residue protein sequence, read N- to C-terminus: tRNA-specific 2-thiouridylase MnmA (380 aa).

ATP-binding positions include 25–32 (AMSGGVDS) and Met-51. The Nucleophile role is filled by Cys-119. A disulfide bond links Cys-119 and Cys-216. Gly-143 lines the ATP pocket. Positions 166 to 168 (KDQ) are interaction with tRNA. Cys-216 serves as the catalytic Cysteine persulfide intermediate. Residues 320 to 321 (RY) form an interaction with tRNA region.

It belongs to the MnmA/TRMU family.

It localises to the cytoplasm. The catalysed reaction is S-sulfanyl-L-cysteinyl-[protein] + uridine(34) in tRNA + AH2 + ATP = 2-thiouridine(34) in tRNA + L-cysteinyl-[protein] + A + AMP + diphosphate + H(+). Functionally, catalyzes the 2-thiolation of uridine at the wobble position (U34) of tRNA, leading to the formation of s(2)U34. This is tRNA-specific 2-thiouridylase MnmA from Deinococcus radiodurans (strain ATCC 13939 / DSM 20539 / JCM 16871 / CCUG 27074 / LMG 4051 / NBRC 15346 / NCIMB 9279 / VKM B-1422 / R1).